We begin with the raw amino-acid sequence, 792 residues long: DNA ligase (792 aa).

Residues 42–46 (DAEYD), 91–92 (SL), and Glu-124 contribute to the NAD(+) site. Lys-126 serves as the catalytic N6-AMP-lysine intermediate. The NAD(+) site is built by Arg-147, Glu-189, Lys-306, and Lys-330. Residues Cys-424, Cys-426, Cys-448, and Cys-454 each contribute to the Zn(2+) site. In terms of domain architecture, BRCT spans 714–792 (KTDTAVAGKT…EDEWLAMVGG (79 aa)).

The protein belongs to the NAD-dependent DNA ligase family. LigA subfamily. It depends on Mg(2+) as a cofactor. The cofactor is Mn(2+).

It catalyses the reaction NAD(+) + (deoxyribonucleotide)n-3'-hydroxyl + 5'-phospho-(deoxyribonucleotide)m = (deoxyribonucleotide)n+m + AMP + beta-nicotinamide D-nucleotide.. Functionally, DNA ligase that catalyzes the formation of phosphodiester linkages between 5'-phosphoryl and 3'-hydroxyl groups in double-stranded DNA using NAD as a coenzyme and as the energy source for the reaction. It is essential for DNA replication and repair of damaged DNA. This Caulobacter sp. (strain K31) protein is DNA ligase.